Here is a 214-residue protein sequence, read N- to C-terminus: ER lumen protein-retaining receptor 3 (214 aa).

The Lumenal segment spans residues 1–4; that stretch reads MNVF. The chain crosses the membrane as a helical span at residues 5–24; the sequence is RILGDLSHLLAMILLLVKIW. Residues 25–32 are Cytoplasmic-facing; the sequence is RSKSCAGI. Residues 33–52 traverse the membrane as a helical segment; sequence SGKSQILFALVFTTRYLDLF. The interval 47-48 is interaction with the K-D-E-L motif on target proteins; that stretch reads RY. Over 53–58 the chain is Lumenal; it reads SNFISI. Residues 59 to 79 form a helical membrane-spanning segment; the sequence is YNTVMKVVFLLCAYVTVYMIY. Over 80 to 92 the chain is Cytoplasmic; sequence WKFRKTFDIENDT. A helical transmembrane segment spans residues 93–110; it reads FRLEFLLVPVTGLSFLVN. At 111–116 the chain is on the lumenal side; sequence YSYTPM. A helical membrane pass occupies residues 117–135; sequence EVLWTFSIYLESVAILPQL. Residues 136-149 lie on the Cytoplasmic side of the membrane; sequence FMISKTGEAETITT. The chain crosses the membrane as a helical span at residues 150–168; it reads HYLFFLGLYRLLYLANWIR. The segment at 159-169 is interaction with the K-D-E-L motif on target proteins; that stretch reads RLLYLANWIRR. Residues 169–178 lie on the Lumenal side of the membrane; sequence RYQTENFYDQ. The chain crosses the membrane as a helical span at residues 179–199; sequence ISVVSGVVQTIFYCDFFYLYV. Residues 200–214 are Cytoplasmic-facing; it reads TKVLKGKKLSLPVPV. Residues 204-207 form an important for recycling of cargo proteins with the sequence motif K-D-E-L from the Golgi to the endoplasmic reticulum region; that stretch reads KGKK.

It belongs to the ERD2 family.

Its subcellular location is the endoplasmic reticulum membrane. The protein localises to the golgi apparatus membrane. It localises to the cytoplasmic vesicle. The protein resides in the COPI-coated vesicle membrane. Functionally, receptor for the C-terminal sequence motif K-D-E-L that is present on endoplasmic reticulum resident proteins and that mediates their recycling from the Golgi back to the endoplasmic reticulum. The protein is ER lumen protein-retaining receptor 3 (Kdelr3) of Mus musculus (Mouse).